We begin with the raw amino-acid sequence, 263 residues long: HTH-type transcriptional repressor NanR (263 aa).

The segment at 1–25 is disordered; sequence MDVMNAFDSQAEDSPTSLGRSLRRR. In terms of domain architecture, HTH gntR-type spans 30–98; that stretch reads KKLSEMVEEE…NGERARVSRP (69 aa). The segment at residues 58 to 77 is a DNA-binding region (H-T-H motif); that stretch reads ERELMAFFNVGRPSVREALA.

This sequence belongs to the NanR family.

Its function is as follows. Transcriptional repressor that controls expression of the genes required for the catabolism of sialic acids. In Salmonella choleraesuis (strain SC-B67), this protein is HTH-type transcriptional repressor NanR.